The chain runs to 207 residues: Ras-related protein Rab-5B (207 aa).

Residue Gly2 is the site of N-myristoyl glycine attachment. GTP contacts are provided by residues 41 to 49, 60 to 66, 90 to 94, 148 to 151, and 176 to 178; these read GDSGVGKSS, SEKHQVT, DTGGQ, NKKD, and SAK. The Effector region signature appears at 63–71; sequence HQVTIGAAF.

It belongs to the small GTPase superfamily. Rab family. Interacts with CK1. May interact with ARF1. Myristoylation is required for cell membrane and food vacuole membrane localization. Post-translationally, may be palmitoylated on Cys-3. In terms of processing, lacks the C-terminal cysteine motifs subject to isoprenylation present in mammalian RAB5B homolog.

Its subcellular location is the cell membrane. The protein resides in the vacuole membrane. It localises to the vesicle. The catalysed reaction is GTP + H2O = GDP + phosphate + H(+). With respect to regulation, alternates between an inactive GDP-bound form and an active GTP-bound form. Activated by guanine nucleotide-exchange factors (GEFs) and inactivated by GTPase-activating proteins (GAPs). In terms of biological role, small GTPase which regulates vesicle trafficking between organelles. May be involved in the trafficking of the N-myristoylated AK2 from the endoplasmic reticulum to the parasitophorous vacuole membrane. This Plasmodium falciparum (isolate 3D7) protein is Ras-related protein Rab-5B.